Here is a 342-residue protein sequence, read N- to C-terminus: Tetraacyldisaccharide 4'-kinase (342 aa).

68-75 (TVGGTGKT) lines the ATP pocket.

It belongs to the LpxK family.

It catalyses the reaction a lipid A disaccharide + ATP = a lipid IVA + ADP + H(+). The protein operates within glycolipid biosynthesis; lipid IV(A) biosynthesis; lipid IV(A) from (3R)-3-hydroxytetradecanoyl-[acyl-carrier-protein] and UDP-N-acetyl-alpha-D-glucosamine: step 6/6. Its function is as follows. Transfers the gamma-phosphate of ATP to the 4'-position of a tetraacyldisaccharide 1-phosphate intermediate (termed DS-1-P) to form tetraacyldisaccharide 1,4'-bis-phosphate (lipid IVA). This chain is Tetraacyldisaccharide 4'-kinase, found in Burkholderia ambifaria (strain MC40-6).